The primary structure comprises 209 residues: Small ribosomal subunit protein uS4 (209 aa).

An S4 RNA-binding domain is found at S99–K159.

This sequence belongs to the universal ribosomal protein uS4 family. In terms of assembly, part of the 30S ribosomal subunit. Contacts protein S5. The interaction surface between S4 and S5 is involved in control of translational fidelity.

Functionally, one of the primary rRNA binding proteins, it binds directly to 16S rRNA where it nucleates assembly of the body of the 30S subunit. Its function is as follows. With S5 and S12 plays an important role in translational accuracy. This Thiobacillus denitrificans (strain ATCC 25259 / T1) protein is Small ribosomal subunit protein uS4.